A 236-amino-acid polypeptide reads, in one-letter code: 7-cyano-7-deazaguanine synthase (236 aa).

ATP is bound at residue 12-22 (FSGGQDSTTCL). Zn(2+) is bound by residues cysteine 200, cysteine 215, cysteine 218, and cysteine 221.

It belongs to the QueC family. It depends on Zn(2+) as a cofactor.

The enzyme catalyses 7-carboxy-7-deazaguanine + NH4(+) + ATP = 7-cyano-7-deazaguanine + ADP + phosphate + H2O + H(+). It participates in purine metabolism; 7-cyano-7-deazaguanine biosynthesis. Catalyzes the ATP-dependent conversion of 7-carboxy-7-deazaguanine (CDG) to 7-cyano-7-deazaguanine (preQ(0)). This chain is 7-cyano-7-deazaguanine synthase, found in Bradyrhizobium sp. (strain ORS 278).